Here is a 396-residue protein sequence, read N- to C-terminus: Elongation factor Tu (396 aa).

The tr-type G domain occupies 11–205 (KPHVNIGTIG…VIDEYIPTPV (195 aa)). A G1 region spans residues 20-27 (GHVDHGKT). A GTP-binding site is contributed by 20–27 (GHVDHGKT). T27 contributes to the Mg(2+) binding site. The G2 stretch occupies residues 61 to 65 (GITIN). The G3 stretch occupies residues 82–85 (DAPG). GTP-binding positions include 82–86 (DAPGH) and 137–140 (NKTD). The tract at residues 137–140 (NKTD) is G4. The interval 175–177 (SAL) is G5.

Belongs to the TRAFAC class translation factor GTPase superfamily. Classic translation factor GTPase family. EF-Tu/EF-1A subfamily. In terms of assembly, monomer.

It is found in the cytoplasm. The catalysed reaction is GTP + H2O = GDP + phosphate + H(+). GTP hydrolase that promotes the GTP-dependent binding of aminoacyl-tRNA to the A-site of ribosomes during protein biosynthesis. The sequence is that of Elongation factor Tu from Oenococcus oeni (strain ATCC BAA-331 / PSU-1).